The chain runs to 113 residues: Large ribosomal subunit protein bL19 (113 aa).

This sequence belongs to the bacterial ribosomal protein bL19 family.

Functionally, this protein is located at the 30S-50S ribosomal subunit interface and may play a role in the structure and function of the aminoacyl-tRNA binding site. The polypeptide is Large ribosomal subunit protein bL19 (Corynebacterium urealyticum (strain ATCC 43042 / DSM 7109)).